The chain runs to 141 residues: Cystatin-SN (141 aa).

The first 20 residues, 1–20 (MAQYLSTLLLLLATLAVALA), serve as a signal peptide directing secretion. Positions 76–80 (QTVGG) match the Secondary area of contact motif. 2 disulfides stabilise this stretch: C94-C104 and C118-C138.

It belongs to the cystatin family. Expressed in submandibular and sublingual saliva but not in parotid saliva (at protein level). Expressed in saliva, tears, urine and seminal fluid.

It localises to the secreted. Its function is as follows. Human saliva appears to contain several cysteine proteinase inhibitors that are immunologically related to cystatin S but that differ in their specificity due to amino acid sequence differences. Cystatin SN, with a pI of 7.5, is a much better inhibitor of papain and dipeptidyl peptidase I than is cystatin S, although both inhibit ficin equally well. The protein is Cystatin-SN (CST1) of Homo sapiens (Human).